The primary structure comprises 157 residues: SsrA-binding protein (157 aa).

Residues K135–R157 are disordered.

The protein belongs to the SmpB family.

It localises to the cytoplasm. Its function is as follows. Required for rescue of stalled ribosomes mediated by trans-translation. Binds to transfer-messenger RNA (tmRNA), required for stable association of tmRNA with ribosomes. tmRNA and SmpB together mimic tRNA shape, replacing the anticodon stem-loop with SmpB. tmRNA is encoded by the ssrA gene; the 2 termini fold to resemble tRNA(Ala) and it encodes a 'tag peptide', a short internal open reading frame. During trans-translation Ala-aminoacylated tmRNA acts like a tRNA, entering the A-site of stalled ribosomes, displacing the stalled mRNA. The ribosome then switches to translate the ORF on the tmRNA; the nascent peptide is terminated with the 'tag peptide' encoded by the tmRNA and targeted for degradation. The ribosome is freed to recommence translation, which seems to be the essential function of trans-translation. In Albidiferax ferrireducens (strain ATCC BAA-621 / DSM 15236 / T118) (Rhodoferax ferrireducens), this protein is SsrA-binding protein.